Consider the following 428-residue polypeptide: Ribosome biogenesis protein WDR12 homolog (428 aa).

The interval 13–97 is ubiquitin-like (UBL) domain; the sequence is LQVHFTTKQK…EDTIELEYVE (85 aa). 7 WD repeats span residues 109–146, 148–190, 197–236, 259–297, 299–338, 344–384, and 388–426; these read LHDD…KLTI, GHVA…NTAE, GHER…DKGE, GHRE…IKTE, TGNK…GNFV, GHSQ…APIF, and GHED…DNTK.

It belongs to the WD repeat WDR12/YTM1 family.

The protein localises to the nucleus. It is found in the nucleolus. Its subcellular location is the nucleoplasm. Its function is as follows. Required for maturation of ribosomal RNAs and formation of the large ribosomal subunit. This is Ribosome biogenesis protein WDR12 homolog from Anopheles gambiae (African malaria mosquito).